Consider the following 261-residue polypeptide: Methionine aminopeptidase (261 aa).

H78 contributes to the substrate binding site. A divalent metal cation is bound by residues D96, D107, and H170. A substrate-binding site is contributed by H177. E202 and E233 together coordinate a divalent metal cation.

It belongs to the peptidase M24A family. Methionine aminopeptidase type 1 subfamily. As to quaternary structure, monomer. Co(2+) is required as a cofactor. The cofactor is Zn(2+). Requires Mn(2+) as cofactor. Fe(2+) serves as cofactor.

The enzyme catalyses Release of N-terminal amino acids, preferentially methionine, from peptides and arylamides.. Removes the N-terminal methionine from nascent proteins. The N-terminal methionine is often cleaved when the second residue in the primary sequence is small and uncharged (Met-Ala-, Cys, Gly, Pro, Ser, Thr, or Val). Requires deformylation of the N(alpha)-formylated initiator methionine before it can be hydrolyzed. In Buchnera aphidicola subsp. Schizaphis graminum (strain Sg), this protein is Methionine aminopeptidase.